A 2431-amino-acid chain; its full sequence is Reducing polyketide synthase rads1 (2431 aa).

The Ketosynthase family 3 (KS3) domain maps to 10–440 (RAPIAIIGLA…GTNAHIVLER (431 aa)). Catalysis depends on for beta-ketoacyl synthase activity residues Cys184, His319, and His363. The tract at residues 558 to 895 (FVFTGQGAQW…NLAAELFRRG (338 aa)) is malonyl-CoA:ACP transacylase (MAT) domain. Residues 944–1080 (KSILGAELPS…GLISIAYEDT (137 aa)) are N-terminal hotdog fold. Residues 944–1267 (KSILGAELPS…LAELEVDDAA (324 aa)) enclose the PKS/mFAS DH domain. The dehydratase (DH) domain stretch occupies residues 946–1264 (ILGAELPSMD…DFRLAELEVD (319 aa)). Catalysis depends on His976, which acts as the Proton acceptor; for dehydratase activity. The interval 1108–1267 (PETCSKERFY…LAELEVDDAA (160 aa)) is C-terminal hotdog fold. Asp1174 functions as the Proton donor; for dehydratase activity in the catalytic mechanism. The enoyl reductase (ER) domain stretch occupies residues 1705–2023 (GLLNTLHFVP…QGKHLGKMIL (319 aa)). Cys1822 (phosphocysteine intermediate) is an active-site residue. Residues 2048–2228 (ATYLIVGGLG…VSVNLGIMRD (181 aa)) form a ketoreductase (KR) domain region. The Carrier domain occupies 2346-2423 (VAAAIITEAL…TFAVQIAKKS (78 aa)). O-(pantetheine 4'-phosphoryl)serine is present on Ser2383.

It participates in secondary metabolite biosynthesis. Its function is as follows. Reducing polyketide synthase; part of the gene cluster that mediates the biosynthesis of radicicol, a resorcylic acid lactone (RAL) that irreversibly inhibits the HSP90 molecular chaperone, an important target for cancer chemotherapy. The cluster encodes only two apparent post-PKS enzymes, a cytochrome P450 monooxygenase (radP) and a non-heme halogenase (radH) that introduce the epoxide and the chlorine, respectively. If this cluster includes all the genes required for radicicol biosynthesis, the remaining structural features of radicicol are presumably generated by the PKSs rads1 and rads2. The C-2' ketone could arise if the R-PKS rads1 and NR-PKS rads2 each carry out four iterations, in contrast to the five iteration-three iteration split for the hypothemycin PKSs. The origin of the cis 5',6' double bond is not known. The radicicol R-PKS radS1 ER domain may catalyze either double bond isomerization or reduction in the third iteration. This is Reducing polyketide synthase rads1 from Floropilus chiversii (Chaetomium chiversii).